A 369-amino-acid chain; its full sequence is MATLDVNPELYQAQLADKIARLKAMFVDYSMPELEVFESPVANYRMRAEFRIWHEGDDMYYIMFNQETREKYRVDQFPAASRLINDLMPLLMDAMKGSPILRHKLFQVDFLSTLSGEILVSLLYHRQLSEEWITAAQALKQRLNDEGFNLNLIGRARKMKVVLDRDYVVENLQVNGQPYVYKQVENSFTQPNAKVAEKMLEWAVDCTQESKGDLLELYCGNGNFSLALAQNFERVLATELAKPSVEAAQFNIAANQIGNVQIIRMSAEEFTQAMEGKREFNRLKDAGVDLQSYRCNTIFVDPPRSGMDIDTCKMVQGYERILYISCNPETLQENLQVLGETHQVVRFALFDQFPYTHHMEAGVMLERKK.

S-adenosyl-L-methionine contacts are provided by Gln190, Tyr218, Asn223, Glu239, and Asp301. Catalysis depends on Cys326, which acts as the Nucleophile. The Proton acceptor role is filled by Glu360.

The protein belongs to the class I-like SAM-binding methyltransferase superfamily. RNA M5U methyltransferase family. TrmA subfamily.

It catalyses the reaction uridine(54) in tRNA + S-adenosyl-L-methionine = 5-methyluridine(54) in tRNA + S-adenosyl-L-homocysteine + H(+). It carries out the reaction uridine(341) in tmRNA + S-adenosyl-L-methionine = 5-methyluridine(341) in tmRNA + S-adenosyl-L-homocysteine + H(+). Its function is as follows. Dual-specificity methyltransferase that catalyzes the formation of 5-methyluridine at position 54 (m5U54) in all tRNAs, and that of position 341 (m5U341) in tmRNA (transfer-mRNA). This Vibrio cholerae serotype O1 (strain ATCC 39541 / Classical Ogawa 395 / O395) protein is tRNA/tmRNA (uracil-C(5))-methyltransferase.